The chain runs to 229 residues: Cytochrome c oxidase subunit 2 (229 aa).

At 1–26 the chain is on the mitochondrial intermembrane side; that stretch reads MSTWANLGLQDSASPLMEQLIFFHDH. The helical transmembrane segment at 27–48 threads the bilayer; sequence ALLILVMITVLVGYLMFMLFFN. At 49-62 the chain is on the mitochondrial matrix side; the sequence is SYVNRFLLHGQLIE. A helical transmembrane segment spans residues 63–82; that stretch reads MIWTILPAIILLFIAMPSLR. The Mitochondrial intermembrane segment spans residues 83-229; it reads LLYLLDEINE…IKWISNSVNS (147 aa). Residues histidine 161, cysteine 196, glutamate 198, cysteine 200, histidine 204, and methionine 207 each coordinate Cu cation. Mg(2+) is bound at residue glutamate 198.

The protein belongs to the cytochrome c oxidase subunit 2 family. In terms of assembly, component of the cytochrome c oxidase (complex IV, CIV), a multisubunit enzyme composed of a catalytic core of 3 subunits and several supernumerary subunits. The complex exists as a monomer or a dimer and forms supercomplexes (SCs) in the inner mitochondrial membrane with ubiquinol-cytochrome c oxidoreductase (cytochrome b-c1 complex, complex III, CIII). Cu cation serves as cofactor.

Its subcellular location is the mitochondrion inner membrane. The enzyme catalyses 4 Fe(II)-[cytochrome c] + O2 + 8 H(+)(in) = 4 Fe(III)-[cytochrome c] + 2 H2O + 4 H(+)(out). In terms of biological role, component of the cytochrome c oxidase, the last enzyme in the mitochondrial electron transport chain which drives oxidative phosphorylation. The respiratory chain contains 3 multisubunit complexes succinate dehydrogenase (complex II, CII), ubiquinol-cytochrome c oxidoreductase (cytochrome b-c1 complex, complex III, CIII) and cytochrome c oxidase (complex IV, CIV), that cooperate to transfer electrons derived from NADH and succinate to molecular oxygen, creating an electrochemical gradient over the inner membrane that drives transmembrane transport and the ATP synthase. Cytochrome c oxidase is the component of the respiratory chain that catalyzes the reduction of oxygen to water. Electrons originating from reduced cytochrome c in the intermembrane space (IMS) are transferred via the dinuclear copper A center (CU(A)) of subunit 2 and heme A of subunit 1 to the active site in subunit 1, a binuclear center (BNC) formed by heme A3 and copper B (CU(B)). The BNC reduces molecular oxygen to 2 water molecules using 4 electrons from cytochrome c in the IMS and 4 protons from the mitochondrial matrix. In Drosophila affinis (Fruit fly), this protein is Cytochrome c oxidase subunit 2 (mt:CoII).